Here is a 282-residue protein sequence, read N- to C-terminus: Bifunctional protein FolD (282 aa).

An NADP(+)-binding site is contributed by 163–165; sequence GRS.

It belongs to the tetrahydrofolate dehydrogenase/cyclohydrolase family. As to quaternary structure, homodimer.

It catalyses the reaction (6R)-5,10-methylene-5,6,7,8-tetrahydrofolate + NADP(+) = (6R)-5,10-methenyltetrahydrofolate + NADPH. The enzyme catalyses (6R)-5,10-methenyltetrahydrofolate + H2O = (6R)-10-formyltetrahydrofolate + H(+). The protein operates within one-carbon metabolism; tetrahydrofolate interconversion. Catalyzes the oxidation of 5,10-methylenetetrahydrofolate to 5,10-methenyltetrahydrofolate and then the hydrolysis of 5,10-methenyltetrahydrofolate to 10-formyltetrahydrofolate. This Leuconostoc citreum (strain KM20) protein is Bifunctional protein FolD.